The following is a 595-amino-acid chain: uncharacterized protein (595 aa).

Residues 1–21 (MSSQLKSTWAPVPSTKPSQPC) are disordered. 11 WD repeats span residues 56 to 95 (EHTAPTTVARFSPSGYYVASGDNQGNVRIWDCAGEDKILK), 100 to 143 (AISG…GEIF), 144 to 184 (GHSS…FNRS), 187 to 226 (VHSKFVYDVRYSPNDERFASAGADGKVYVFDGKTGDQVYE), 229 to 268 (AHKGSIFSISWSPDSSQFVTSSAGYSCKIWDANTGSLIRE), 313 to 352 (GHQRSITAATLSPDATHFYTASYDGTVLSWDIGKQKAFPL), 356 to 393 (SHTNQVMQMIMADDHVITIGMDDTLRVIDIKQGCFAKD), 433 to 472 (KTIYQPSAVASHPLKSEFCVGGEDCCVYIHTLEKGELCEV), 477 to 516 (DSTAPITCLAYSPDGKYLACGDASGKVVLYDANSREVITS), 520 to 559 (FHTGRILGMSWNAKSTHLATASLDTNIHIYSVERPMKYIA), and 564 to 594 (HSLGATQVEWVSENELLSTGSDAAIKVWSVT).

It belongs to the WD repeat AIP1 family.

This is an uncharacterized protein from Schizosaccharomyces pombe (strain 972 / ATCC 24843) (Fission yeast).